The primary structure comprises 450 residues: UDP-N-acetylmuramoylalanine--D-glutamate ligase (450 aa).

115 to 121 (GTNGKTT) provides a ligand contact to ATP.

The protein belongs to the MurCDEF family.

The protein resides in the cytoplasm. The enzyme catalyses UDP-N-acetyl-alpha-D-muramoyl-L-alanine + D-glutamate + ATP = UDP-N-acetyl-alpha-D-muramoyl-L-alanyl-D-glutamate + ADP + phosphate + H(+). Its pathway is cell wall biogenesis; peptidoglycan biosynthesis. Functionally, cell wall formation. Catalyzes the addition of glutamate to the nucleotide precursor UDP-N-acetylmuramoyl-L-alanine (UMA). This is UDP-N-acetylmuramoylalanine--D-glutamate ligase from Desulfatibacillum aliphaticivorans.